A 329-amino-acid chain; its full sequence is GTP 3',8-cyclase (329 aa).

Positions 8–234 constitute a Radical SAM core domain; sequence AFARKFYYLR…QLRQRSDGPA (227 aa). Arg-17 is a binding site for GTP. [4Fe-4S] cluster contacts are provided by Cys-24 and Cys-28. An S-adenosyl-L-methionine-binding site is contributed by Tyr-30. [4Fe-4S] cluster is bound at residue Cys-31. Arg-68 serves as a coordination point for GTP. Gly-72 is an S-adenosyl-L-methionine binding site. Thr-99 provides a ligand contact to GTP. Residue Ser-123 participates in S-adenosyl-L-methionine binding. Lys-160 contacts GTP. Met-194 contacts S-adenosyl-L-methionine. Residues Cys-257 and Cys-260 each contribute to the [4Fe-4S] cluster site. 262–264 contributes to the GTP binding site; sequence RLR. Cys-274 contacts [4Fe-4S] cluster.

It belongs to the radical SAM superfamily. MoaA family. Monomer and homodimer. [4Fe-4S] cluster serves as cofactor.

The catalysed reaction is GTP + AH2 + S-adenosyl-L-methionine = (8S)-3',8-cyclo-7,8-dihydroguanosine 5'-triphosphate + 5'-deoxyadenosine + L-methionine + A + H(+). It participates in cofactor biosynthesis; molybdopterin biosynthesis. Catalyzes the cyclization of GTP to (8S)-3',8-cyclo-7,8-dihydroguanosine 5'-triphosphate. This chain is GTP 3',8-cyclase, found in Escherichia coli O127:H6 (strain E2348/69 / EPEC).